The following is a 479-amino-acid chain: MVSKDTGKCILTTSESEVEPAACLALEMKYALDPNRQIKKRNKALQVRFKDICEAQNEQRDTQLSSGQLGEKREAKPVSCRAAYRKYMTVPARRSIPNVTKSTGVQTSPDLKKCYQTFPLDRKKGNLKSLPAADPFKSQNNGFLTDAKEKNEAGPMEEARPCGAGRVHKTTALVFHSNQHMNTVDQPLGVNCTEPCKSPEPLSYGEAALQNSTRPPSEEPDYQLLGRAKQDRGRPNSEEPAPPALRRVFKTEVATVYAPALSARAPEPGLSDSAAASQWSLCPADDERRRATHLNGLQAPSETALACSPPMQCLSPECSEQPSQTHTPPGLGNQPSPTAVAAGEECQRIVPHTEVVDLKAQLQMMENLISSSQETIKVLLGVIQELEKGEAHREGLSYRTGQDTANCDTCRNSACIIYSVELDFKQQEDKLQPVLRKLHPIEETQVIPSPYSQETYSSTPKQKSKTESKKHGRWKLWFL.

The residue at position 177 (serine 177) is a Phosphoserine. Disordered regions lie at residues 226–247 (GRAK…ALRR) and 315–338 (SPEC…PSPT). Over residues 228–237 (AKQDRGRPNS) the composition is skewed to basic and acidic residues. Polar residues predominate over residues 318–337 (CSEQPSQTHTPPGLGNQPSP). The stretch at 353-379 (TEVVDLKAQLQMMENLISSSQETIKVL) forms a coiled coil. The span at 449–461 (SPYSQETYSSTPK) shows a compositional bias: polar residues. The segment at 449 to 472 (SPYSQETYSSTPKQKSKTESKKHG) is disordered.

It belongs to the INSYN2 family. Interacts with GPHN.

The protein localises to the postsynaptic density. Functionally, component of the protein machinery at the inhibitory synapses, probably acting as a scaffold. Inhibitory synapses dampen neuronal activity through postsynaptic hyperpolarization. This synaptic inhibition is fundamental for the functioning of the central nervous system, shaping and orchestrating the flow of information through neuronal networks to generate a precise neural code. The polypeptide is Inhibitory synaptic factor 2A (Homo sapiens (Human)).